The sequence spans 243 residues: NAD-dependent protein deacetylase (243 aa).

The Deacetylase sirtuin-type domain occupies 1-243 (MKHDLETLKH…VSVVKSLMTE (243 aa)). NAD(+) is bound by residues Ala-24, Phe-35, Arg-36, Gln-105, Ile-107, Asp-108, and His-123. Phe-35 lines the nicotinamide pocket. Residues Ile-107 and Asp-108 each coordinate nicotinamide. Residue His-123 is the Proton acceptor of the active site. Residues Cys-131, Cys-134, Cys-151, and Cys-154 each coordinate Zn(2+). The NAD(+) site is built by Ser-192, Ser-193, Asn-215, and Asp-232.

This sequence belongs to the sirtuin family. Class U subfamily. Zn(2+) serves as cofactor.

It is found in the cytoplasm. It catalyses the reaction N(6)-acetyl-L-lysyl-[protein] + NAD(+) + H2O = 2''-O-acetyl-ADP-D-ribose + nicotinamide + L-lysyl-[protein]. Its function is as follows. NAD-dependent protein deacetylase which modulates the activities of several enzymes which are inactive in their acetylated form. The protein is NAD-dependent protein deacetylase of Staphylococcus aureus (strain NCTC 8325 / PS 47).